The following is a 183-amino-acid chain: RNA 2',3'-cyclic phosphodiesterase (183 aa).

Histidine 44 functions as the Proton donor in the catalytic mechanism. Short sequence motifs (HXTX) lie at residues histidine 44–leucine 47 and histidine 130–leucine 133. Histidine 130 serves as the catalytic Proton acceptor.

It belongs to the 2H phosphoesterase superfamily. ThpR family.

It catalyses the reaction a 3'-end 2',3'-cyclophospho-ribonucleotide-RNA + H2O = a 3'-end 2'-phospho-ribonucleotide-RNA + H(+). In terms of biological role, hydrolyzes RNA 2',3'-cyclic phosphodiester to an RNA 2'-phosphomonoester. The polypeptide is RNA 2',3'-cyclic phosphodiesterase (ytlP) (Bacillus subtilis (strain 168)).